The primary structure comprises 187 residues: Probable DNA-directed RNA polymerase subunit delta (187 aa).

An HTH HARE-type domain is found at 14-81 (LSMIEVAHAL…GNNVWALRSW (68 aa)). The interval 96-187 (EIEDEEEEKP…EDDSDDTDED (92 aa)) is disordered. Composition is skewed to acidic residues over residues 117 to 149 (IEDE…EDKD) and 157 to 187 (ELAE…TDED).

It belongs to the RpoE family. As to quaternary structure, RNAP is composed of a core of 2 alpha, a beta and a beta' subunits. The core is associated with a delta subunit and one of several sigma factors.

In terms of biological role, participates in both the initiation and recycling phases of transcription. In the presence of the delta subunit, RNAP displays an increased specificity of transcription, a decreased affinity for nucleic acids, and an increased efficiency of RNA synthesis because of enhanced recycling. This Lactococcus lactis subsp. cremoris (strain SK11) protein is Probable DNA-directed RNA polymerase subunit delta.